A 420-amino-acid polypeptide reads, in one-letter code: ATP phosphoribosyltransferase regulatory subunit (420 aa).

This sequence belongs to the class-II aminoacyl-tRNA synthetase family. HisZ subfamily. In terms of assembly, heteromultimer composed of HisG and HisZ subunits.

Its subcellular location is the cytoplasm. Its pathway is amino-acid biosynthesis; L-histidine biosynthesis; L-histidine from 5-phospho-alpha-D-ribose 1-diphosphate: step 1/9. Functionally, required for the first step of histidine biosynthesis. May allow the feedback regulation of ATP phosphoribosyltransferase activity by histidine. This Bacillus cereus (strain G9842) protein is ATP phosphoribosyltransferase regulatory subunit.